A 491-amino-acid polypeptide reads, in one-letter code: Endoglucanase 14 (491 aa).

Positions Met-1–Ser-31 are cleaved as a signal peptide. Residue Asp-86 is the Nucleophile of the active site. Residue Asn-397 is glycosylated (N-linked (GlcNAc...) asparagine). Active-site residues include His-413, Asp-465, and Glu-474.

This sequence belongs to the glycosyl hydrolase 9 (cellulase E) family.

It is found in the secreted. It catalyses the reaction Endohydrolysis of (1-&gt;4)-beta-D-glucosidic linkages in cellulose, lichenin and cereal beta-D-glucans.. The polypeptide is Endoglucanase 14 (Arabidopsis thaliana (Mouse-ear cress)).